We begin with the raw amino-acid sequence, 49 residues long: MELILDCFVNWSFDKIMDYILIAGLYFVFKSKSKQNYPDHFEEKRRHRN.

A helical transmembrane segment spans residues 7–29 (CFVNWSFDKIMDYILIAGLYFVF).

The protein localises to the cell membrane. In Bacillus subtilis (strain 168), this protein is SPbeta prophage-derived uncharacterized protein YoqT (yoqT).